The following is a 302-amino-acid chain: tRNA pseudouridine synthase B (302 aa).

The active-site Nucleophile is Asp38.

The protein belongs to the pseudouridine synthase TruB family. Type 1 subfamily.

It catalyses the reaction uridine(55) in tRNA = pseudouridine(55) in tRNA. Its function is as follows. Responsible for synthesis of pseudouridine from uracil-55 in the psi GC loop of transfer RNAs. This chain is tRNA pseudouridine synthase B, found in Ligilactobacillus salivarius (strain UCC118) (Lactobacillus salivarius).